Consider the following 87-residue polypeptide: HssA/B-like protein 54 (87 aa).

The protein belongs to the hssA/B family.

The chain is HssA/B-like protein 54 (hssl54) from Dictyostelium discoideum (Social amoeba).